A 122-amino-acid chain; its full sequence is Large ribosomal subunit protein bL17 (122 aa).

It belongs to the bacterial ribosomal protein bL17 family. As to quaternary structure, part of the 50S ribosomal subunit. Contacts protein L32.

The sequence is that of Large ribosomal subunit protein bL17 from Nautilia profundicola (strain ATCC BAA-1463 / DSM 18972 / AmH).